The chain runs to 308 residues: Putative S-adenosyl-L-methionine-dependent methyltransferase Mjls_1073 (308 aa).

S-adenosyl-L-methionine is bound by residues Asp-133 and 162–163; that span reads DL.

This sequence belongs to the UPF0677 family.

Functionally, exhibits S-adenosyl-L-methionine-dependent methyltransferase activity. In Mycobacterium sp. (strain JLS), this protein is Putative S-adenosyl-L-methionine-dependent methyltransferase Mjls_1073.